The following is a 227-amino-acid chain: 2,3-bisphosphoglycerate-dependent phosphoglycerate mutase (227 aa).

Residues 8 to 15 (RHGKSVWN), 21 to 22 (TG), R58, 110 to 113 (ERMY), K121, 137 to 138 (RR), and 181 to 182 (GN) contribute to the substrate site. Residue H9 is the Tele-phosphohistidine intermediate of the active site. E110 acts as the Proton donor/acceptor in catalysis.

This sequence belongs to the phosphoglycerate mutase family. BPG-dependent PGAM subfamily.

It carries out the reaction (2R)-2-phosphoglycerate = (2R)-3-phosphoglycerate. It functions in the pathway carbohydrate degradation; glycolysis; pyruvate from D-glyceraldehyde 3-phosphate: step 3/5. Catalyzes the interconversion of 2-phosphoglycerate and 3-phosphoglycerate. This chain is 2,3-bisphosphoglycerate-dependent phosphoglycerate mutase, found in Chlamydia abortus (strain DSM 27085 / S26/3) (Chlamydophila abortus).